Consider the following 196-residue polypeptide: Endoribonuclease YbeY (196 aa).

3 residues coordinate Zn(2+): His120, His124, and His130.

Belongs to the endoribonuclease YbeY family. It depends on Zn(2+) as a cofactor.

Its subcellular location is the cytoplasm. Functionally, single strand-specific metallo-endoribonuclease involved in late-stage 70S ribosome quality control and in maturation of the 3' terminus of the 16S rRNA. The sequence is that of Endoribonuclease YbeY from Corynebacterium diphtheriae (strain ATCC 700971 / NCTC 13129 / Biotype gravis).